Consider the following 231-residue polypeptide: Large ribosomal subunit protein uL1 (231 aa).

This sequence belongs to the universal ribosomal protein uL1 family. As to quaternary structure, part of the 50S ribosomal subunit.

In terms of biological role, binds directly to 23S rRNA. The L1 stalk is quite mobile in the ribosome, and is involved in E site tRNA release. Functionally, protein L1 is also a translational repressor protein, it controls the translation of the L11 operon by binding to its mRNA. The chain is Large ribosomal subunit protein uL1 from Stutzerimonas stutzeri (strain A1501) (Pseudomonas stutzeri).